The chain runs to 350 residues: tRNA uridine(34) hydroxylase (350 aa).

The Rhodanese domain maps to D146–L240. The active-site Cysteine persulfide intermediate is C200. Over residues R319 to G328 the composition is skewed to basic and acidic residues. A disordered region spans residues R319–E350.

This sequence belongs to the TrhO family.

It carries out the reaction uridine(34) in tRNA + AH2 + O2 = 5-hydroxyuridine(34) in tRNA + A + H2O. Catalyzes oxygen-dependent 5-hydroxyuridine (ho5U) modification at position 34 in tRNAs. This chain is tRNA uridine(34) hydroxylase, found in Salmonella schwarzengrund (strain CVM19633).